The following is a 534-amino-acid chain: Probable inorganic phosphate transporter 1-8 (534 aa).

At 1–21 the chain is on the cytoplasmic side; it reads MPIKVLSSLDVARTQWYHFKA. The chain crosses the membrane as a helical span at residues 22 to 42; it reads IIVAGMGLFTDAYDLFCIAPV. At 43 to 61 the chain is on the extracellular side; it reads MKMISHVYYNGDSINTAVL. The chain crosses the membrane as a helical span at residues 62–82; that stretch reads STSYAIALLGTATGQLVFGYL. At 83-90 the chain is on the cytoplasmic side; the sequence is GDRVGRRR. A helical membrane pass occupies residues 91-111; the sequence is VYGLCLIIMILSSFGCGFSVC. Residues 112–123 are Extracellular-facing; sequence TTRRSCVMVSLG. Residues 124–144 form a helical membrane-spanning segment; that stretch reads FFRFFLGLGIGGDYPLSATIM. Over 145 to 153 the chain is Cytoplasmic; the sequence is SEFANKRTR. A helical membrane pass occupies residues 154-174; sequence GAFIAAVFSMQGLGILVSSAV. Topologically, residues 175–199 are extracellular; that stretch reads TMAVCVAFKRSGGGLEVDAAAPTEA. A helical transmembrane segment spans residues 200–220; sequence DLAWRLILMIGALPAALTFYW. The Cytoplasmic segment spans residues 221-281; sequence RMLMPETARY…KLFSRCFFRL (61 aa). A helical transmembrane segment spans residues 282 to 302; sequence HGRDLFAASFNWFLVDIVFYT. Residues 303–333 lie on the Extracellular side of the membrane; it reads SNLLLSHIFSHYSKKPSTAENVYDAAFEVAE. Residues 334–354 form a helical membrane-spanning segment; the sequence is LGAIIAACSTIPGYWFTVYFI. Residues 355 to 361 are Cytoplasmic-facing; that stretch reads DKIGRVK. A helical transmembrane segment spans residues 362 to 382; that stretch reads IQIMGFFFMAVIYLVAGIPYS. Residues 383–396 lie on the Extracellular side of the membrane; that stretch reads WYWSKHEHNNKGFM. Residues 397-417 traverse the membrane as a helical segment; sequence VLYGLVFFFCNFGPNTTTFII. Residues 418–431 are Cytoplasmic-facing; the sequence is PAEHFPARFRSTCH. A helical transmembrane segment spans residues 432–452; the sequence is GISGAAGKLGAIVGTVGFLWA. Over 453–472 the chain is Extracellular; it reads TKKMESDDKNQIYPEVNRMR. Residues 473–493 form a helical membrane-spanning segment; sequence IAFLILGGVCIAGILVTYFFT. The Cytoplasmic segment spans residues 494-534; it reads KETMGRSLEENEHDQDNNAESEDEPQIVDGQSSVSTLLQTR. The interval 501–534 is disordered; sequence LEENEHDQDNNAESEDEPQIVDGQSSVSTLLQTR. The span at 510–519 shows a compositional bias: acidic residues; sequence NNAESEDEPQ. Ser514 is subject to Phosphoserine. The span at 522–534 shows a compositional bias: polar residues; the sequence is DGQSSVSTLLQTR.

This sequence belongs to the major facilitator superfamily. Phosphate:H(+) symporter (TC 2.A.1.9) family. As to expression, in roots.

The protein resides in the membrane. In terms of biological role, high-affinity transporter for external inorganic phosphate. The chain is Probable inorganic phosphate transporter 1-8 (PHT1-8) from Arabidopsis thaliana (Mouse-ear cress).